The following is a 156-amino-acid chain: Cyclin-dependent kinase inhibitor 2A (156 aa).

M1 bears the N-acetylmethionine mark. 2 positions are modified to phosphoserine: S7 and S8. ANK repeat units lie at residues 11 to 40 (PSAD…LPNA), 44 to 72 (YGRR…EPNC), 77 to 106 (TLTR…RLDV), and 110 to 139 (WGRL…GTRG). S140 and S152 each carry phosphoserine.

Belongs to the CDKN2 cyclin-dependent kinase inhibitor family. Heterodimer with CDK4 or CDK6. Predominant p16 complexes contained CDK6. Interacts with CDK4 (both 'T-172'-phosphorylated and non-phosphorylated forms); the interaction inhibits cyclin D-CDK4 kinase activity. Interacts with ISCO2. Post-translationally, phosphorylation seems to increase interaction with CDK4. In terms of tissue distribution, widely expressed but not detected in brain or skeletal muscle. Isoform 3 is pancreas-specific.

Its subcellular location is the cytoplasm. The protein localises to the nucleus. Functionally, acts as a negative regulator of the proliferation of normal cells by interacting strongly with CDK4 and CDK6. This inhibits their ability to interact with cyclins D and to phosphorylate the retinoblastoma protein. The sequence is that of Cyclin-dependent kinase inhibitor 2A from Homo sapiens (Human).